We begin with the raw amino-acid sequence, 70 residues long: Small ribosomal subunit protein eS17 (70 aa).

The protein belongs to the eukaryotic ribosomal protein eS17 family.

The protein is Small ribosomal subunit protein eS17 of Methanopyrus kandleri (strain AV19 / DSM 6324 / JCM 9639 / NBRC 100938).